The chain runs to 1486 residues: Chromosome partition protein MukB (1486 aa).

Residue 34–41 (GGNGAGKS) coordinates ATP. Coiled-coil stretches lie at residues 326 to 418 (LEAD…QYNQ), 444 to 480 (LETF…QAYQ), and 509 to 603 (RHLA…RAPV). Residues 666 to 783 (PGGSEDQRLN…EVPLFGRAAR (118 aa)) are flexible hinge. Coiled coils occupy residues 835 to 923 (EAEI…AKLE), 977 to 1115 (EMLS…TAKA), and 1209 to 1266 (VEAI…QNVS).

The protein belongs to the SMC family. MukB subfamily. In terms of assembly, homodimerization via its hinge domain. Binds to DNA via its C-terminal region. Interacts, and probably forms a ternary complex, with MukE and MukF via its C-terminal region. The complex formation is stimulated by calcium or magnesium. Interacts with tubulin-related protein FtsZ.

It localises to the cytoplasm. The protein localises to the nucleoid. In terms of biological role, plays a central role in chromosome condensation, segregation and cell cycle progression. Functions as a homodimer, which is essential for chromosome partition. Involved in negative DNA supercoiling in vivo, and by this means organize and compact chromosomes. May achieve or facilitate chromosome segregation by condensation DNA from both sides of a centrally located replisome during cell division. The sequence is that of Chromosome partition protein MukB from Escherichia coli O157:H7.